The following is a 362-amino-acid chain: 3-isopropylmalate dehydrogenase (362 aa).

G78–E91 serves as a coordination point for NAD(+). Residues R99, R109, R138, and D227 each contribute to the substrate site. The Mg(2+) site is built by D227, D251, and D255. NAD(+) is bound at residue G285–N297.

This sequence belongs to the isocitrate and isopropylmalate dehydrogenases family. LeuB type 1 subfamily. Homodimer. Requires Mg(2+) as cofactor. It depends on Mn(2+) as a cofactor.

The protein localises to the cytoplasm. It catalyses the reaction (2R,3S)-3-isopropylmalate + NAD(+) = 4-methyl-2-oxopentanoate + CO2 + NADH. The protein operates within amino-acid biosynthesis; L-leucine biosynthesis; L-leucine from 3-methyl-2-oxobutanoate: step 3/4. Catalyzes the oxidation of 3-carboxy-2-hydroxy-4-methylpentanoate (3-isopropylmalate) to 3-carboxy-4-methyl-2-oxopentanoate. The product decarboxylates to 4-methyl-2 oxopentanoate. This chain is 3-isopropylmalate dehydrogenase, found in Geobacter sulfurreducens (strain ATCC 51573 / DSM 12127 / PCA).